Consider the following 73-residue polypeptide: Exodeoxyribonuclease 7 small subunit (73 aa).

The protein belongs to the XseB family. As to quaternary structure, heterooligomer composed of large and small subunits.

The protein resides in the cytoplasm. It carries out the reaction Exonucleolytic cleavage in either 5'- to 3'- or 3'- to 5'-direction to yield nucleoside 5'-phosphates.. Its function is as follows. Bidirectionally degrades single-stranded DNA into large acid-insoluble oligonucleotides, which are then degraded further into small acid-soluble oligonucleotides. The chain is Exodeoxyribonuclease 7 small subunit from Clostridium novyi (strain NT).